The following is a 357-amino-acid chain: Peptide chain release factor 1 (357 aa).

N5-methylglutamine is present on glutamine 236.

This sequence belongs to the prokaryotic/mitochondrial release factor family. Post-translationally, methylated by PrmC. Methylation increases the termination efficiency of RF1.

Its subcellular location is the cytoplasm. Functionally, peptide chain release factor 1 directs the termination of translation in response to the peptide chain termination codons UAG and UAA. This is Peptide chain release factor 1 from Mycobacterium avium (strain 104).